The following is a 509-amino-acid chain: ATP synthase subunit alpha (509 aa).

169–176 serves as a coordination point for ATP; the sequence is GDRQTGKT.

This sequence belongs to the ATPase alpha/beta chains family. As to quaternary structure, F-type ATPases have 2 components, CF(1) - the catalytic core - and CF(0) - the membrane proton channel. CF(1) has five subunits: alpha(3), beta(3), gamma(1), delta(1), epsilon(1). CF(0) has three main subunits: a(1), b(2) and c(9-12). The alpha and beta chains form an alternating ring which encloses part of the gamma chain. CF(1) is attached to CF(0) by a central stalk formed by the gamma and epsilon chains, while a peripheral stalk is formed by the delta and b chains.

The protein resides in the cell inner membrane. It catalyses the reaction ATP + H2O + 4 H(+)(in) = ADP + phosphate + 5 H(+)(out). Its function is as follows. Produces ATP from ADP in the presence of a proton gradient across the membrane. The alpha chain is a regulatory subunit. This Rhizobium meliloti (strain 1021) (Ensifer meliloti) protein is ATP synthase subunit alpha.